Consider the following 505-residue polypeptide: Photosystem II CP47 reaction center protein (505 aa).

Residues 1–19 (GLPWYRVHTVLINDPGRLI) lie on the Cytoplasmic side of the membrane. Chlorophyll a is bound by residues histidine 8, histidine 22, histidine 25, histidine 99, and histidine 113. Residues 20-35 (AAHLMHTALVAGWAGS) traverse the membrane as a helical segment. Residues 36-99 (MALYELATFD…WSFEGVALAH (64 aa)) are Lumenal-facing. A helical membrane pass occupies residues 100 to 114 (IVLSGLLFLAACWHW). At 115–138 (VYWDLELFRDPRTGEPALDLPKMF) the chain is on the cytoplasmic side. A helical transmembrane segment spans residues 139–155 (GIHLFLAGLLCFGFGAF). Chlorophyll a contacts are provided by histidine 141, histidine 156, histidine 200, histidine 201, and histidine 215. At 156–201 (HLTGLFGPGMWVSDPYGLTGSVQPVAPEWGPDGFNPYNPGGVVAHH) the chain is on the lumenal side. Residues 202–217 (IAAGIVGIIAGLFHIL) form a helical membrane-spanning segment. The Cytoplasmic portion of the chain corresponds to 218–235 (VRPPQRLYKALRMGNIET). A helical transmembrane segment spans residues 236-251 (VLSSSIAAVFFAAFVV). Topologically, residues 252-455 (AGTMWYGSAT…PRGWFTFAHA (204 aa)) are lumenal. The chlorophyll a site is built by histidine 454, histidine 465, and histidine 468. The helical transmembrane segment at 456 to 471 (VFALLFFFGHIWHGAR) threads the bilayer. The Cytoplasmic portion of the chain corresponds to 472-505 (TLFRDVFSGIDPELSPEQVEWGFYQKVGDVTTRK).

Belongs to the PsbB/PsbC family. PsbB subfamily. In terms of assembly, PSII is composed of 1 copy each of membrane proteins PsbA, PsbB, PsbC, PsbD, PsbE, PsbF, PsbH, PsbI, PsbJ, PsbK, PsbL, PsbM, PsbT, PsbX, PsbY, PsbZ, Psb30/Ycf12, peripheral proteins PsbO, CyanoQ (PsbQ), PsbU, PsbV and a large number of cofactors. It forms dimeric complexes. The cofactor is Binds multiple chlorophylls. PSII binds additional chlorophylls, carotenoids and specific lipids..

Its subcellular location is the cellular thylakoid membrane. Its function is as follows. One of the components of the core complex of photosystem II (PSII). It binds chlorophyll and helps catalyze the primary light-induced photochemical processes of PSII. PSII is a light-driven water:plastoquinone oxidoreductase, using light energy to abstract electrons from H(2)O, generating O(2) and a proton gradient subsequently used for ATP formation. This is Photosystem II CP47 reaction center protein from Thermostichus vulcanus (Synechococcus vulcanus).